Here is a 557-residue protein sequence, read N- to C-terminus: 6-phosphofructo-2-kinase/fructose-2,6-bisphosphatase 2 (557 aa).

The span at 1 to 16 (MSENSTFSTEDSSSSS) shows a compositional bias: low complexity. The disordered stretch occupies residues 1-21 (MSENSTFSTEDSSSSSYKPHA). Position 2 is an N-acetylserine (S2). Positions 2 to 251 (SENSTFSTED…VYYLMNIHVH (250 aa)) are 6-phosphofructo-2-kinase. S32 bears the Phosphoserine; by PKA mark. 48 to 56 (GLPARGKTY) contributes to the ATP binding site. Residues R81 and R105 each contribute to the beta-D-fructose 6-phosphate site. D131 is a catalytic residue. The beta-D-fructose 6-phosphate site is built by T133 and R139. The active site involves C161. An ATP-binding site is contributed by 170–175 (NILEVK). Beta-D-fructose 6-phosphate contacts are provided by K175, R196, and Y200. The tract at residues 252 to 557 (PRTIYLCRHG…PSMASLTLLS (306 aa)) is fructose-2,6-bisphosphatase. R259 provides a ligand contact to beta-D-fructose 2,6-bisphosphate. Catalysis depends on H260, which acts as the Tele-phosphohistidine intermediate. N266 and G272 together coordinate beta-D-fructose 2,6-bisphosphate. E329 serves as the catalytic Proton donor/acceptor. Residues Y340, R354, K358, Y369, Q395, and R399 each coordinate beta-D-fructose 2,6-bisphosphate. Residue 351–354 (FALR) participates in ATP binding. ATP-binding positions include 395–399 (QAVMR) and Y431. Positions 449-495 (RDKPTHNFPKSQTPVRMRRNSFTPLSSSNTIRRPRNYSVGSRPLKPL) are disordered. Positions 456–479 (FPKSQTPVRMRRNSFTPLSSSNTI) are enriched in polar residues. At S469 the chain carries Phosphoserine. The residue at position 471 (T471) is a Phosphothreonine. Residue T478 is modified to Phosphothreonine; by PKC. Phosphoserine occurs at positions 486 and 496.

This sequence in the C-terminal section; belongs to the phosphoglycerate mutase family. Homodimer. Forms a heterodimer with PFKFB3. Phosphorylation by AMPK stimulates activity.

The enzyme catalyses beta-D-fructose 2,6-bisphosphate + H2O = beta-D-fructose 6-phosphate + phosphate. The catalysed reaction is beta-D-fructose 6-phosphate + ATP = beta-D-fructose 2,6-bisphosphate + ADP + H(+). Phosphorylation results in the activation of the kinase activity. Synthesis and degradation of fructose 2,6-bisphosphate. The protein is 6-phosphofructo-2-kinase/fructose-2,6-bisphosphatase 2 (Pfkfb2) of Rattus norvegicus (Rat).